Here is a 54-residue protein sequence, read N- to C-terminus: Conotoxin mr5.4b (54 aa).

A signal peptide spans 1–14 (ILLLLIASAPSVDA). Residues 15–40 (QLKTKDDVPLASFHANVKRTLQKLLN) constitute a propeptide that is removed on maturation. Position 52 is a 4-carboxyglutamate (Glu-52).

This sequence belongs to the conotoxin T superfamily. Contains 2 disulfide bonds that can be either 'C1-C3, C2-C4' or 'C1-C4, C2-C3', since these disulfide connectivities have been observed for conotoxins with cysteine framework V (for examples, see AC P0DQQ7 and AC P81755). As to expression, expressed by the venom duct.

It localises to the secreted. The sequence is that of Conotoxin mr5.4b from Conus marmoreus (Marble cone).